Consider the following 503-residue polypeptide: AMP phosphorylase (503 aa).

AMP-binding positions include glycine 168, 194-199 (SRAITS), and threonine 203. Aspartate 256 serves as the catalytic Proton donor. AMP-binding residues include serine 264 and lysine 288.

It belongs to the thymidine/pyrimidine-nucleoside phosphorylase family. Type 2 subfamily.

It carries out the reaction AMP + phosphate = alpha-D-ribose 1,5-bisphosphate + adenine. It catalyses the reaction CMP + phosphate = cytosine + alpha-D-ribose 1,5-bisphosphate. The enzyme catalyses UMP + phosphate = alpha-D-ribose 1,5-bisphosphate + uracil. Catalyzes the conversion of AMP and phosphate to adenine and ribose 1,5-bisphosphate (R15P). Exhibits phosphorylase activity toward CMP and UMP in addition to AMP. Functions in an archaeal AMP degradation pathway, together with R15P isomerase and RubisCO. In Pyrococcus abyssi (strain GE5 / Orsay), this protein is AMP phosphorylase (deoA).